Reading from the N-terminus, the 439-residue chain is Methylenetetrahydrofolate--tRNA-(uracil-5-)-methyltransferase TrmFO (439 aa).

Position 8 to 13 (8 to 13 (GAGLAG)) interacts with FAD.

The protein belongs to the MnmG family. TrmFO subfamily. It depends on FAD as a cofactor.

It localises to the cytoplasm. The enzyme catalyses uridine(54) in tRNA + (6R)-5,10-methylene-5,6,7,8-tetrahydrofolate + NADH + H(+) = 5-methyluridine(54) in tRNA + (6S)-5,6,7,8-tetrahydrofolate + NAD(+). It carries out the reaction uridine(54) in tRNA + (6R)-5,10-methylene-5,6,7,8-tetrahydrofolate + NADPH + H(+) = 5-methyluridine(54) in tRNA + (6S)-5,6,7,8-tetrahydrofolate + NADP(+). In terms of biological role, catalyzes the folate-dependent formation of 5-methyl-uridine at position 54 (M-5-U54) in all tRNAs. This Magnetococcus marinus (strain ATCC BAA-1437 / JCM 17883 / MC-1) protein is Methylenetetrahydrofolate--tRNA-(uracil-5-)-methyltransferase TrmFO.